The chain runs to 401 residues: Chaperone protein DnaJ (401 aa).

Residues 4 to 69 (DYYEVLGVSR…DKRRRYDQFG (66 aa)) enclose the J domain. The CR-type zinc finger occupies 156 to 237 (GVEKTLKIKK…CYGEGIKQGD (82 aa)). Positions 169, 172, 185, 188, 211, 214, 225, and 228 each coordinate Zn(2+). 4 CXXCXGXG motif repeats span residues 169 to 176 (CKECNGSG), 185 to 192 (CQTCHGSG), 211 to 218 (CPTCGGEG), and 225 to 232 (CTACYGEG). The disordered stretch occupies residues 377–401 (AFSPSGSNNDKEEKSFFEKARDIFS). Residues 385–401 (NDKEEKSFFEKARDIFS) are compositionally biased toward basic and acidic residues.

Belongs to the DnaJ family. In terms of assembly, homodimer. Zn(2+) is required as a cofactor.

The protein localises to the cytoplasm. Participates actively in the response to hyperosmotic and heat shock by preventing the aggregation of stress-denatured proteins and by disaggregating proteins, also in an autonomous, DnaK-independent fashion. Unfolded proteins bind initially to DnaJ; upon interaction with the DnaJ-bound protein, DnaK hydrolyzes its bound ATP, resulting in the formation of a stable complex. GrpE releases ADP from DnaK; ATP binding to DnaK triggers the release of the substrate protein, thus completing the reaction cycle. Several rounds of ATP-dependent interactions between DnaJ, DnaK and GrpE are required for fully efficient folding. Also involved, together with DnaK and GrpE, in the DNA replication of plasmids through activation of initiation proteins. The polypeptide is Chaperone protein DnaJ (Chlorobium limicola (strain DSM 245 / NBRC 103803 / 6330)).